We begin with the raw amino-acid sequence, 353 residues long: Photosystem II protein D1 (353 aa).

Threonine 2 is modified (N-acetylthreonine). Threonine 2 carries the post-translational modification Phosphothreonine. 3 helical membrane passes run 29–46 (YIGWFGVIMIPCLLTAIS), 118–133 (HFLLGIACYMGREWEL), and 142–156 (WIAVAYSAPVAAATA). Histidine 118 is a chlorophyll a binding site. Tyrosine 126 provides a ligand contact to pheophytin a. Aspartate 170 and glutamate 189 together coordinate [CaMn4O5] cluster. The chain crosses the membrane as a helical span at residues 197 to 218 (FHMLGVAGVFGGSLFSAMHGSL). Histidine 198 is a chlorophyll a binding site. A quinone is bound by residues histidine 215 and 264–265 (SF). Histidine 215 provides a ligand contact to Fe cation. Histidine 272 is a binding site for Fe cation. Residues 274–288 (FLAVWPVVGIWFTAM) traverse the membrane as a helical segment. Positions 332, 333, 342, and 344 each coordinate [CaMn4O5] cluster. A propeptide spanning residues 345–353 (SVEAPAVNG) is cleaved from the precursor.

The protein belongs to the reaction center PufL/M/PsbA/D family. In terms of assembly, PSII is composed of 1 copy each of membrane proteins PsbA, PsbB, PsbC, PsbD, PsbE, PsbF, PsbH, PsbI, PsbJ, PsbK, PsbL, PsbM, PsbT, PsbX, PsbY, PsbZ, Psb30/Ycf12, at least 3 peripheral proteins of the oxygen-evolving complex and a large number of cofactors. It forms dimeric complexes. The cofactor is The D1/D2 heterodimer binds P680, chlorophylls that are the primary electron donor of PSII, and subsequent electron acceptors. It shares a non-heme iron and each subunit binds pheophytin, quinone, additional chlorophylls, carotenoids and lipids. D1 provides most of the ligands for the Mn4-Ca-O5 cluster of the oxygen-evolving complex (OEC). There is also a Cl(-1) ion associated with D1 and D2, which is required for oxygen evolution. The PSII complex binds additional chlorophylls, carotenoids and specific lipids.. In terms of processing, tyr-161 forms a radical intermediate that is referred to as redox-active TyrZ, YZ or Y-Z. C-terminally processed by CTPA; processing is essential to allow assembly of the oxygen-evolving complex and thus photosynthetic growth.

Its subcellular location is the plastid. The protein resides in the chloroplast thylakoid membrane. The enzyme catalyses 2 a plastoquinone + 4 hnu + 2 H2O = 2 a plastoquinol + O2. Its function is as follows. Photosystem II (PSII) is a light-driven water:plastoquinone oxidoreductase that uses light energy to abstract electrons from H(2)O, generating O(2) and a proton gradient subsequently used for ATP formation. It consists of a core antenna complex that captures photons, and an electron transfer chain that converts photonic excitation into a charge separation. The D1/D2 (PsbA/PsbD) reaction center heterodimer binds P680, the primary electron donor of PSII as well as several subsequent electron acceptors. In Mesostigma viride (Green alga), this protein is Photosystem II protein D1.